We begin with the raw amino-acid sequence, 129 residues long: Large ribosomal subunit protein bL12 (129 aa).

The protein belongs to the bacterial ribosomal protein bL12 family. In terms of assembly, homodimer. Part of the ribosomal stalk of the 50S ribosomal subunit. Forms a multimeric L10(L12)X complex, where L10 forms an elongated spine to which 2 to 4 L12 dimers bind in a sequential fashion. Binds GTP-bound translation factors.

In terms of biological role, forms part of the ribosomal stalk which helps the ribosome interact with GTP-bound translation factors. Is thus essential for accurate translation. This Micrococcus luteus (strain ATCC 4698 / DSM 20030 / JCM 1464 / CCM 169 / CCUG 5858 / IAM 1056 / NBRC 3333 / NCIMB 9278 / NCTC 2665 / VKM Ac-2230) (Micrococcus lysodeikticus) protein is Large ribosomal subunit protein bL12.